The primary structure comprises 238 residues: 6-phosphogluconolactonase (238 aa).

The protein belongs to the glucosamine/galactosamine-6-phosphate isomerase family. 6-phosphogluconolactonase subfamily.

It carries out the reaction 6-phospho-D-glucono-1,5-lactone + H2O = 6-phospho-D-gluconate + H(+). Its pathway is carbohydrate degradation; pentose phosphate pathway; D-ribulose 5-phosphate from D-glucose 6-phosphate (oxidative stage): step 2/3. Functionally, hydrolysis of 6-phosphogluconolactone to 6-phosphogluconate. The chain is 6-phosphogluconolactonase (pgl) from Mesorhizobium japonicum (strain LMG 29417 / CECT 9101 / MAFF 303099) (Mesorhizobium loti (strain MAFF 303099)).